The chain runs to 257 residues: Homeobox protein ceh-36 (257 aa).

The segment covering 33-49 (SATTSSTTMAPMAPNSE) has biased composition (low complexity). Disordered regions lie at residues 33–63 (SATT…TSFN) and 113–156 (DRNN…GTPE). Residues 55–117 (GRRERTSFNR…NRRAKDRNNK (63 aa)) constitute a DNA-binding region (homeobox). Residues 123 to 137 (HPGSTSSRSSNGSPH) show a composition bias toward low complexity.

This sequence belongs to the paired homeobox family. As to quaternary structure, interacts with sox-2. In terms of tissue distribution, expressed in ASE and AWC chemosensory neurons. Expressed left-right asymmetrically in the embryo, in the grandmother cell and the mother cell to the MI pharyngeal motorneuron but in neither analogous precursors of the e3D neuron.

It localises to the nucleus. Probable transcription factor, acting as a progenitor identity factor regulating the development of lineally-related embryonic cells including glial, excretory and neuronal cells. Mediates chemosensory function of ASE and AWC neurons. In ASE neurons, required to diversify the fate of the ASEL neurons from the ASER neurons. Acts cell-autonomously to establish a neuronal left right asymmetry, possibly promoting asymmetric expression of the helix-loop-helix proteins ngn-1 and hlh-2. In cooperation with the transcription factor sox-2, required for the differentiation of AWC olfactory neurons. May regulate the expression of sox-2 in AWC olfactory neurons. This chain is Homeobox protein ceh-36, found in Caenorhabditis elegans.